The primary structure comprises 735 residues: Receptor-type guanylate cyclase gcy-27 (735 aa).

The N-linked (GlcNAc...) asparagine glycan is linked to asparagine 11. Residues 28 to 48 form a helical membrane-spanning segment; that stretch reads FIICTLPVPIYFVVVAIWTIN. One can recognise a Protein kinase domain in the interval 188–465; sequence ALTSRRRVFG…IENLRNAIAI (278 aa). One can recognise a Guanylate cyclase domain in the interval 538–668; the sequence is TVMFVQICDF…DTVNFASRMQ (131 aa).

This sequence belongs to the adenylyl cyclase class-4/guanylyl cyclase family. Expressed bilaterally in ASK, ASI and ASJ sensory neurons.

The protein localises to the cell membrane. The catalysed reaction is GTP = 3',5'-cyclic GMP + diphosphate. In terms of biological role, guanylate cyclase involved in the production of the second messenger cGMP. May be involved in sensitivity to quinine by regulating egl-4 activity through the production of cGMP. Promotes the calcium flux to the cytoplasm in ASJ sensory neurons upon removal of a nitric oxide (NO) stimulus and is thereby involved in the behavioral avoidance response to NO-producing organisms like P.aeruginosa. The polypeptide is Receptor-type guanylate cyclase gcy-27 (Caenorhabditis elegans).